A 690-amino-acid polypeptide reads, in one-letter code: MKRLLLTSALPYANGHIHIGHLVEYTQTDIFARYWRMTGRRCISLCADDTHGTAIMIRARQEGRSEADVIADMSAAHQRDFAAFQIRFDHYGSTNSPANRALCEEIWASLRERGMVTTKEVTQLFDPQEGMFLADRFVKGTCPKCAAPDQYGDSCDRCGSTYAATDLVEPRSALTGARPEVRSAQHLMVAIEPERPFLSTWTQGEGRMPKEIANYLAGHFLSEPLRDWDVSRPAPYFGFEIPDAPGNYWYVWFDAPIGYMAASKEWCDREGEAFDDWWRSEETEIVHVIGKDIVYFHTLFWPAMLKSARFSLPSRVQVHGFLTVNGEKMSKSKGTFVLASTYLKHLDPAYLRYYYASKLSSKVDDIDLNLEELVNKVNAELVNKVVNLASRSSRFVAQTGLSAVYPEDGGLFASAAEEGDAIGAAYAAFDYARATRSIVALADRANEYVDRMQPWALAKQPEKKAELQAVCTVALNLFRQIVLYLAPVLPKLADDVARLLGCPMDRWALAKTPLVGTPVAAYEHLMKRVEPGAVEKMIAEGRPAEEAAAPGGAAGANAEAGQAAGGGAAAEDDGAALAKEPLAPECTIDDFSKVDLRVARIVAAEHVPEAKKLLKLTVSLGGEARRTVFAGIKAYYKPEDLIGRLVIVCANLAPRKMKFGLSEGMVLAAGDETVHLLSPDSGAKPGMRVH.

Residues 11 to 21 (PYANGHIHIGH) carry the 'HIGH' region motif. The Zn(2+) site is built by Cys-142, Cys-145, Cys-155, and Cys-158. Positions 328-332 (KMSKS) match the 'KMSKS' region motif. Residue Lys-331 coordinates ATP. A tRNA-binding domain is found at 590–690 (DFSKVDLRVA…SGAKPGMRVH (101 aa)).

The protein belongs to the class-I aminoacyl-tRNA synthetase family. MetG type 1 subfamily. In terms of assembly, homodimer. Zn(2+) is required as a cofactor.

The protein localises to the cytoplasm. It carries out the reaction tRNA(Met) + L-methionine + ATP = L-methionyl-tRNA(Met) + AMP + diphosphate. Its function is as follows. Is required not only for elongation of protein synthesis but also for the initiation of all mRNA translation through initiator tRNA(fMet) aminoacylation. The polypeptide is Methionine--tRNA ligase 1 (Sorangium cellulosum (strain So ce56) (Polyangium cellulosum (strain So ce56))).